The chain runs to 916 residues: Protein translocase subunit SecA (916 aa).

ATP contacts are provided by residues glutamine 87, 105-109 (GEGKT), and aspartate 507. Positions 900, 902, 911, and 912 each coordinate Zn(2+).

Belongs to the SecA family. As to quaternary structure, monomer and homodimer. Part of the essential Sec protein translocation apparatus which comprises SecA, SecYEG and auxiliary proteins SecDF-YajC and YidC. Zn(2+) serves as cofactor.

It localises to the cell inner membrane. Its subcellular location is the cytoplasm. It carries out the reaction ATP + H2O + cellular proteinSide 1 = ADP + phosphate + cellular proteinSide 2.. Its function is as follows. Part of the Sec protein translocase complex. Interacts with the SecYEG preprotein conducting channel. Has a central role in coupling the hydrolysis of ATP to the transfer of proteins into and across the cell membrane, serving both as a receptor for the preprotein-SecB complex and as an ATP-driven molecular motor driving the stepwise translocation of polypeptide chains across the membrane. This chain is Protein translocase subunit SecA, found in Neisseria meningitidis serogroup C (strain 053442).